Consider the following 317-residue polypeptide: Beta-ketoacyl-[acyl-carrier-protein] synthase III (317 aa).

Residues cysteine 112 and histidine 244 contribute to the active site. The ACP-binding stretch occupies residues 245–249; sequence QANLR. Asparagine 274 is a catalytic residue.

This sequence belongs to the thiolase-like superfamily. FabH family. Homodimer.

It localises to the cytoplasm. It catalyses the reaction malonyl-[ACP] + acetyl-CoA + H(+) = 3-oxobutanoyl-[ACP] + CO2 + CoA. The protein operates within lipid metabolism; fatty acid biosynthesis. In terms of biological role, catalyzes the condensation reaction of fatty acid synthesis by the addition to an acyl acceptor of two carbons from malonyl-ACP. Catalyzes the first condensation reaction which initiates fatty acid synthesis and may therefore play a role in governing the total rate of fatty acid production. Possesses both acetoacetyl-ACP synthase and acetyl transacylase activities. Its substrate specificity determines the biosynthesis of branched-chain and/or straight-chain of fatty acids. The sequence is that of Beta-ketoacyl-[acyl-carrier-protein] synthase III from Aliivibrio fischeri (strain ATCC 700601 / ES114) (Vibrio fischeri).